A 217-amino-acid polypeptide reads, in one-letter code: Protein-L-isoaspartate O-methyltransferase (217 aa).

The active site involves S59.

Belongs to the methyltransferase superfamily. L-isoaspartyl/D-aspartyl protein methyltransferase family.

Its subcellular location is the cytoplasm. The enzyme catalyses [protein]-L-isoaspartate + S-adenosyl-L-methionine = [protein]-L-isoaspartate alpha-methyl ester + S-adenosyl-L-homocysteine. Catalyzes the methyl esterification of L-isoaspartyl residues in peptides and proteins that result from spontaneous decomposition of normal L-aspartyl and L-asparaginyl residues. It plays a role in the repair and/or degradation of damaged proteins. The chain is Protein-L-isoaspartate O-methyltransferase (pcm) from Methanothermobacter thermautotrophicus (strain ATCC 29096 / DSM 1053 / JCM 10044 / NBRC 100330 / Delta H) (Methanobacterium thermoautotrophicum).